We begin with the raw amino-acid sequence, 353 residues long: Putative ABC transporter ATP-binding protein MG303 homolog (353 aa).

An ABC transporter domain is found at 72-312 (LYFYNLSVFV…MQLLQRYEIT (241 aa)). 107-114 (GPSGSGKT) lines the ATP pocket.

It belongs to the ABC transporter superfamily.

The protein is Putative ABC transporter ATP-binding protein MG303 homolog of Mycoplasma pneumoniae (strain ATCC 29342 / M129 / Subtype 1) (Mycoplasmoides pneumoniae).